The following is a 266-amino-acid chain: Putative expansin-A30 (266 aa).

A signal peptide spans 1–24 (MAAASSTTATTAILAAVIISLAGA). Positions 55–170 (GGACGYGNLY…RRVPCARAGG (116 aa)) constitute an Expansin-like EG45 domain. The Expansin-like CBD domain occupies 180 to 261 (YWLLAYVMNV…SWCFGLTYQA (82 aa)).

Belongs to the expansin family. Expansin A subfamily.

It is found in the secreted. It localises to the cell wall. The protein resides in the membrane. In terms of biological role, may cause loosening and extension of plant cell walls by disrupting non-covalent bonding between cellulose microfibrils and matrix glucans. No enzymatic activity has been found. May be required for rapid internodal elongation in deepwater rice during submergence. The chain is Putative expansin-A30 (EXPA30) from Oryza sativa subsp. japonica (Rice).